Reading from the N-terminus, the 879-residue chain is Beta-mannosidase (879 aa).

Positions 1–19 are cleaved as a signal peptide; sequence MHLHLLLILALFRAGCVVA. N-linked (GlcNAc...) asparagine glycans are attached at residues Asn-35, Asn-77, Asn-89, and Asn-113. Cys-167 and Cys-176 are oxidised to a cystine. 190–192 contributes to the substrate binding site; the sequence is WDW. N-linked (GlcNAc...) asparagine glycans are attached at residues Asn-226, Asn-297, and Asn-302. Asn-456 serves as a coordination point for substrate. Residue Glu-457 is the Proton donor of the active site. Disulfide bonds link Cys-540–Cys-629, Cys-732–Cys-761, and Cys-764–Cys-769. The active-site Nucleophile is the Glu-554. The N-linked (GlcNAc...) asparagine glycan is linked to Asn-736. Asn-803 and Asn-807 each carry an N-linked (GlcNAc...) asparagine glycan.

Belongs to the glycosyl hydrolase 2 family. As to quaternary structure, monomer. As to expression, highest level in liver, high levels in lung, testis, skin and spleen, moderate level in thymus. Activity found in plasma, kidney, liver, spleen, pancreas, brain, testis, epididymis, heart, lung and skeletal muscle.

It localises to the lysosome. It carries out the reaction Hydrolysis of terminal, non-reducing beta-D-mannose residues in beta-D-mannosides.. Its pathway is glycan metabolism; N-glycan degradation. Exoglycosidase that cleaves the single beta-linked mannose residue from the non-reducing end of all N-linked glycoprotein oligosaccharides. The chain is Beta-mannosidase from Mus musculus (Mouse).